The chain runs to 258 residues: Octanoyltransferase (258 aa).

The BPL/LPL catalytic domain occupies 42 to 226 (NVGTDTLLLL…AVVAALDGEL (185 aa)). Substrate contacts are provided by residues 80-87 (RGGKITWH), 156-158 (AIG), and 169-171 (GFS). The active-site Acyl-thioester intermediate is the Cys187.

The protein belongs to the LipB family.

The protein resides in the cytoplasm. It carries out the reaction octanoyl-[ACP] + L-lysyl-[protein] = N(6)-octanoyl-L-lysyl-[protein] + holo-[ACP] + H(+). The protein operates within protein modification; protein lipoylation via endogenous pathway; protein N(6)-(lipoyl)lysine from octanoyl-[acyl-carrier-protein]: step 1/2. In terms of biological role, catalyzes the transfer of endogenously produced octanoic acid from octanoyl-acyl-carrier-protein onto the lipoyl domains of lipoate-dependent enzymes. Lipoyl-ACP can also act as a substrate although octanoyl-ACP is likely to be the physiological substrate. In Rhodococcus jostii (strain RHA1), this protein is Octanoyltransferase.